A 66-amino-acid polypeptide reads, in one-letter code: Sec-independent protein translocase protein TatA (66 aa).

The chain crosses the membrane as a helical span at residues Met-1–Arg-21. The tract at residues Ala-43–Glu-66 is disordered. Residues Pro-50–Glu-66 show a composition bias toward basic and acidic residues.

It belongs to the TatA/E family. The Tat system comprises two distinct complexes: a TatABC complex, containing multiple copies of TatA, TatB and TatC subunits, and a separate TatA complex, containing only TatA subunits. Substrates initially bind to the TatABC complex, which probably triggers association of the separate TatA complex to form the active translocon.

The protein resides in the cell inner membrane. Part of the twin-arginine translocation (Tat) system that transports large folded proteins containing a characteristic twin-arginine motif in their signal peptide across membranes. TatA could form the protein-conducting channel of the Tat system. The sequence is that of Sec-independent protein translocase protein TatA from Pelagibacter ubique (strain HTCC1062).